We begin with the raw amino-acid sequence, 556 residues long: 2-methylpropanoate--CoA ligase CCL4 (556 aa).

ATP contacts are provided by residues 192–200 (TSGTTSSPK), 325–330 (HGYGLT), D423, 435–438 (IKDR), and K531. The interval 260–325 (DSEIIYDMIK…TESLGFAVSH (66 aa)) is SBD1. Positions 326-402 (GYGLTETAGL…LRGGSVMLGY (77 aa)) are SBD2.

It belongs to the ATP-dependent AMP-binding enzyme family. In terms of tissue distribution, mostly expressed in old leaves and in cones and glandular trichomes (lupulin glands) after flowering, and, to a lower extent, in stems, young leaves and flowers.

It is found in the cytoplasm. The protein resides in the cytosol. It carries out the reaction 2-methylpropanoate + ATP + CoA = 2-methylpropanoyl-CoA + AMP + diphosphate. It catalyses the reaction propanoate + ATP + CoA = propanoyl-CoA + AMP + diphosphate. The catalysed reaction is butanoate + ATP + CoA = butanoyl-CoA + AMP + diphosphate. The enzyme catalyses 2-methylbutanoate + ATP + CoA = 2-methylbutanoyl-CoA + AMP + diphosphate. It participates in secondary metabolite biosynthesis. In terms of biological role, involved in the biosynthesis of prenylated phenolics natural products which contribute to the bitter taste of beer and display broad biological activities. Catalyzes the ligation of CoA on 2-methylpropanoate (isobutyric acid) and 2-methylbutanoate to produce 2-methylpropanoyl-CoA and 2-methylbutanoyl-CoA, respectively. Can also use propanoate and butanoate as substrates with a lower efficiency. The sequence is that of 2-methylpropanoate--CoA ligase CCL4 from Humulus lupulus (European hop).